Consider the following 260-residue polypeptide: 2-oxo-tetronate isomerase (260 aa).

The Proton donor/acceptor role is filled by glutamate 143. Mg(2+)-binding residues include glutamate 143, aspartate 178, glutamine 204, and glutamate 240. The Proton donor/acceptor role is filled by glutamate 240.

Belongs to the hyi family. OtnI subfamily.

The catalysed reaction is 2-dehydro-L-erythronate = 3-dehydro-L-erythronate. It catalyses the reaction 2-dehydro-D-erythronate = 3-dehydro-D-erythronate. Catalyzes the isomerization of 2-oxo-tetronate to 3-oxo-tetronate. The sequence is that of 2-oxo-tetronate isomerase from Cupriavidus necator (strain ATCC 17699 / DSM 428 / KCTC 22496 / NCIMB 10442 / H16 / Stanier 337) (Ralstonia eutropha).